Consider the following 679-residue polypeptide: MSEPRQILVTSALPYANGSIHLGHMLEYIQTDMWVRFQKMRGNQCIYVCADDAHGSAIMLRAEKEGITPEQLIANVQAEHSSDFADFLVDFDNFHSTHSEENRELSSLIYTRLREAGHIATRSVTQYFDPEKGMFLADRFIKGTCPKCAAEDQYGDNCEKCGATYAPTELKNPKSAISGATPVLRDSQHFFFKLPDFQAMLQQWTRSGTLQDAVANKLAEWLDSGLQEWDISRDAPYFGFEIPGEPGKYFYVWLDAPIGYMASFKNLCARRPELDFDAFWNEGSKAELYHFIGKDIVNFHALFWPAMLEGAGFRKPTAVNVHGYLTVNGAKMSKSRGTFIKARTYLDHLQPEYLRYYYAAKLGRGVDDLDLNLEDFVQKVNSDLVGKVVNIASRCAGFIHKGNEGVMVSGDAAPELTEAFLTAAPSIAEAYEARDFGRAMREIMALADRANAWIADKAPWSLAKQEGKQDEVQAICAQGINLFRQLVIFLKPVLPVLAADAEAFLNVAPLTWSDHLSRLENHKLNPFKALMSRIEPAKVEAMVAASKEDLLATQAKAPAGNGELTKDPLSAEIEFDTFAAVDLRVALIVKAEAVAGADKLLQLTLDIGDERRNVFSGIKSAYPDPSKLEGRLTMMVANLKPRKMRFGVSEGMVMAAGPGGEEIYLLSPDSGAKPGQRIK.

The 'HIGH' region signature appears at 14–24 (PYANGSIHLGH). 4 residues coordinate Zn(2+): C145, C148, C158, and C161. Positions 331–335 (KMSKS) match the 'KMSKS' region motif. K334 is a binding site for ATP. The tRNA-binding domain maps to 577-679 (TFAAVDLRVA…SGAKPGQRIK (103 aa)).

The protein belongs to the class-I aminoacyl-tRNA synthetase family. MetG type 1 subfamily. In terms of assembly, homodimer. Requires Zn(2+) as cofactor.

It localises to the cytoplasm. The enzyme catalyses tRNA(Met) + L-methionine + ATP = L-methionyl-tRNA(Met) + AMP + diphosphate. Is required not only for elongation of protein synthesis but also for the initiation of all mRNA translation through initiator tRNA(fMet) aminoacylation. The protein is Methionine--tRNA ligase of Pseudomonas putida (strain GB-1).